Consider the following 196-residue polypeptide: Ribosome maturation factor RimP (196 aa).

The segment at 163–196 (GLAPSKPTGPAPKRPKPKTNSSSNEPAAKKPRAE) is disordered.

Belongs to the RimP family.

The protein localises to the cytoplasm. Required for maturation of 30S ribosomal subunits. This chain is Ribosome maturation factor RimP, found in Stenotrophomonas maltophilia (strain R551-3).